Here is a 316-residue protein sequence, read N- to C-terminus: Pantothenate kinase (316 aa).

95-102 (GSVAVGKS) lines the ATP pocket.

The protein belongs to the prokaryotic pantothenate kinase family.

Its subcellular location is the cytoplasm. The enzyme catalyses (R)-pantothenate + ATP = (R)-4'-phosphopantothenate + ADP + H(+). It functions in the pathway cofactor biosynthesis; coenzyme A biosynthesis; CoA from (R)-pantothenate: step 1/5. This is Pantothenate kinase from Shigella dysenteriae serotype 1 (strain Sd197).